The sequence spans 404 residues: Diaminopropionate ammonia-lyase (404 aa).

Lys-78 bears the N6-(pyridoxal phosphate)lysine mark.

This sequence belongs to the diaminopropionate ammonia-lyase family. Homodimer. It depends on pyridoxal 5'-phosphate as a cofactor.

The catalysed reaction is (S)-2,3-diaminopropanoate + H2O + H(+) = pyruvate + 2 NH4(+). The enzyme catalyses (R)-2,3-diaminopropanoate + H2O + H(+) = pyruvate + 2 NH4(+). Its activity is regulated as follows. Competitively inhibited by L- and D-alanine. In terms of biological role, catalyzes the alpha,beta-elimination reaction of both L- and D-alpha,beta-diaminopropionate (DAP) to form pyruvate and ammonia. In vitro L- and D-isomers of serine are also degraded, though slowly; it is the only serine dehydratase which can eliminate an amino group at the beta-carbon position. In vivo L-, D- and a mixure of DL-DAP allow growth. DL-DAP is toxic in the absence of this enzyme, it may inhibit enzymes involved in the synthesis of pyruvate and aspartate, as well as amino acids derived from them. In Salmonella typhimurium (strain LT2 / SGSC1412 / ATCC 700720), this protein is Diaminopropionate ammonia-lyase (dpaL).